The sequence spans 290 residues: Ribosomal RNA small subunit methyltransferase A (290 aa).

Asn-27, Leu-29, Gly-54, Glu-75, Asp-100, and Asn-125 together coordinate S-adenosyl-L-methionine.

Belongs to the class I-like SAM-binding methyltransferase superfamily. rRNA adenine N(6)-methyltransferase family. RsmA subfamily.

The protein localises to the cytoplasm. The enzyme catalyses adenosine(1518)/adenosine(1519) in 16S rRNA + 4 S-adenosyl-L-methionine = N(6)-dimethyladenosine(1518)/N(6)-dimethyladenosine(1519) in 16S rRNA + 4 S-adenosyl-L-homocysteine + 4 H(+). Its function is as follows. Specifically dimethylates two adjacent adenosines (A1518 and A1519) in the loop of a conserved hairpin near the 3'-end of 16S rRNA in the 30S particle. May play a critical role in biogenesis of 30S subunits. The protein is Ribosomal RNA small subunit methyltransferase A of Streptococcus thermophilus (strain ATCC BAA-491 / LMD-9).